A 353-amino-acid chain; its full sequence is tRNA-specific 2-thiouridylase MnmA 2 (353 aa).

6-13 (LLSGGVDS) is an ATP binding site. Residues 92 to 94 (NPD) form an interaction with target base in tRNA region. C97 serves as the catalytic Nucleophile. C97 and C192 are oxidised to a cystine. G120 contacts ATP. The segment at 142–144 (KDQ) is interaction with tRNA. C192 functions as the Cysteine persulfide intermediate in the catalytic mechanism.

This sequence belongs to the MnmA/TRMU family.

The protein resides in the cytoplasm. It carries out the reaction S-sulfanyl-L-cysteinyl-[protein] + uridine(34) in tRNA + AH2 + ATP = 2-thiouridine(34) in tRNA + L-cysteinyl-[protein] + A + AMP + diphosphate + H(+). Functionally, catalyzes the 2-thiolation of uridine at the wobble position (U34) of tRNA, leading to the formation of s(2)U34. The sequence is that of tRNA-specific 2-thiouridylase MnmA 2 from Bacteroides fragilis (strain ATCC 25285 / DSM 2151 / CCUG 4856 / JCM 11019 / LMG 10263 / NCTC 9343 / Onslow / VPI 2553 / EN-2).